The sequence spans 400 residues: S-adenosylmethionine synthase (400 aa).

Histidine 17 contacts ATP. Mg(2+) is bound at residue aspartate 19. Glutamate 45 contacts K(+). L-methionine contacts are provided by glutamate 58 and glutamine 101. The tract at residues 101–111 (QSADIAMGVDQ) is flexible loop. ATP-binding positions include 177–179 (DGK), 244–245 (RF), aspartate 253, 259–260 (RK), alanine 276, and lysine 280. Aspartate 253 serves as a coordination point for L-methionine. Lysine 284 contacts L-methionine.

It belongs to the AdoMet synthase family. As to quaternary structure, homotetramer; dimer of dimers. Mg(2+) is required as a cofactor. Requires K(+) as cofactor.

It localises to the cytoplasm. The catalysed reaction is L-methionine + ATP + H2O = S-adenosyl-L-methionine + phosphate + diphosphate. Its pathway is amino-acid biosynthesis; S-adenosyl-L-methionine biosynthesis; S-adenosyl-L-methionine from L-methionine: step 1/1. Functionally, catalyzes the formation of S-adenosylmethionine (AdoMet) from methionine and ATP. The overall synthetic reaction is composed of two sequential steps, AdoMet formation and the subsequent tripolyphosphate hydrolysis which occurs prior to release of AdoMet from the enzyme. This chain is S-adenosylmethionine synthase, found in Bacillus velezensis (strain DSM 23117 / BGSC 10A6 / LMG 26770 / FZB42) (Bacillus amyloliquefaciens subsp. plantarum).